The chain runs to 554 residues: DNA ligase B (554 aa).

Lys122 functions as the N6-AMP-lysine intermediate in the catalytic mechanism.

It belongs to the NAD-dependent DNA ligase family. LigB subfamily.

It carries out the reaction NAD(+) + (deoxyribonucleotide)n-3'-hydroxyl + 5'-phospho-(deoxyribonucleotide)m = (deoxyribonucleotide)n+m + AMP + beta-nicotinamide D-nucleotide.. Functionally, catalyzes the formation of phosphodiester linkages between 5'-phosphoryl and 3'-hydroxyl groups in double-stranded DNA using NAD as a coenzyme and as the energy source for the reaction. This is DNA ligase B from Pseudomonas fluorescens (strain SBW25).